The following is a 493-amino-acid chain: NADH-quinone oxidoreductase subunit M (493 aa).

14 consecutive transmembrane segments (helical) span residues 5 to 25 (PIIS…LLFI), 37 to 57 (VMYV…YILI), 89 to 109 (ISIL…IGSL), 115 to 135 (YIKE…GAFT), 139 to 159 (LLLF…IIGV), 172 to 192 (FFLY…YIYS), 216 to 236 (ILWW…PFHT), 251 to 271 (VILA…VLLP), 280 to 300 (FAIY…LVAL), 308 to 328 (MIAY…FSFT), 334 to 354 (GAIF…LIVG), 375 to 395 (MPVL…LPGT), 411 to 431 (VNVV…VYML), and 458 to 478 (IISI…PSSI).

It belongs to the complex I subunit 4 family.

The protein localises to the cell membrane. It catalyses the reaction a quinone + NADH + 5 H(+)(in) = a quinol + NAD(+) + 4 H(+)(out). Its function is as follows. NDH-1 shuttles electrons from NADH, via FMN and iron-sulfur (Fe-S) centers, to quinones in the respiratory chain. Couples the redox reaction to proton translocation (for every two electrons transferred, four hydrogen ions are translocated across the cytoplasmic membrane), and thus conserves the redox energy in a proton gradient. The sequence is that of NADH-quinone oxidoreductase subunit M (nuoM) from Rickettsia conorii (strain ATCC VR-613 / Malish 7).